The sequence spans 186 residues: Holliday junction branch migration complex subunit RuvA (186 aa).

The tract at residues 1–61 is domain I; the sequence is MYRYIKGIVT…EDIFQLYGFK (61 aa). The segment at 62–134 is domain II; it reads DEETLNLFLK…LKGKLVNDEL (73 aa). Residues 134 to 137 are flexible linker; that stretch reads LDMQ. Positions 138–186 are domain III; that stretch reads LLSDNSKDVAAALEALGYNKKEIAKSLKHVNFDQDLNKALKEALAILLK.

It belongs to the RuvA family. In terms of assembly, homotetramer. Forms an RuvA(8)-RuvB(12)-Holliday junction (HJ) complex. HJ DNA is sandwiched between 2 RuvA tetramers; dsDNA enters through RuvA and exits via RuvB. An RuvB hexamer assembles on each DNA strand where it exits the tetramer. Each RuvB hexamer is contacted by two RuvA subunits (via domain III) on 2 adjacent RuvB subunits; this complex drives branch migration. In the full resolvosome a probable DNA-RuvA(4)-RuvB(12)-RuvC(2) complex forms which resolves the HJ.

It is found in the cytoplasm. In terms of biological role, the RuvA-RuvB-RuvC complex processes Holliday junction (HJ) DNA during genetic recombination and DNA repair, while the RuvA-RuvB complex plays an important role in the rescue of blocked DNA replication forks via replication fork reversal (RFR). RuvA specifically binds to HJ cruciform DNA, conferring on it an open structure. The RuvB hexamer acts as an ATP-dependent pump, pulling dsDNA into and through the RuvAB complex. HJ branch migration allows RuvC to scan DNA until it finds its consensus sequence, where it cleaves and resolves the cruciform DNA. In Acholeplasma laidlawii (strain PG-8A), this protein is Holliday junction branch migration complex subunit RuvA.